The following is a 472-amino-acid chain: UDP-glucosyltransferase 103 (472 aa).

Catalysis depends on His-15, which acts as the Proton acceptor. Position 15 (His-15) interacts with an anthocyanidin. Residue Asp-117 is the Charge relay of the active site. Ala-344, Gln-346, His-361, Trp-364, Asn-365, Ser-366, and Glu-369 together coordinate UDP-alpha-D-glucose. Gly-384 contributes to the an anthocyanidin binding site. The UDP-alpha-D-glucose site is built by Glu-385 and Gln-386.

The protein belongs to the UDP-glycosyltransferase family.

The catalysed reaction is (20S)-ginsenoside F1 + UDP-alpha-D-glucose = (20S)-ginsenoside Rg1 + UDP + H(+). It functions in the pathway secondary metabolite biosynthesis; terpenoid biosynthesis. In terms of biological role, probable component of the triterpene saponins (e.g. ginsenosides) biosynthetic pathway. No detectable activity toward protopanaxatriol (PPT). The protein is UDP-glucosyltransferase 103 of Panax ginseng (Korean ginseng).